A 198-amino-acid chain; its full sequence is Recombination protein RecR (198 aa).

Residues 56–71 form a C4-type zinc finger; it reads CEICGNVSEQATCSIC. The Toprim domain occupies 79-174; that stretch reads ALICVVEEAK…RVTRLASGLP (96 aa).

This sequence belongs to the RecR family.

In terms of biological role, may play a role in DNA repair. It seems to be involved in an RecBC-independent recombinational process of DNA repair. It may act with RecF and RecO. This is Recombination protein RecR from Leifsonia xyli subsp. xyli (strain CTCB07).